A 73-amino-acid polypeptide reads, in one-letter code: Toxin Td12 (73 aa).

An N-terminal signal peptide occupies residues 1-7 (IGMVIEC). In terms of domain architecture, LCN-type CS-alpha/beta spans 8–70 (KDGYLMEPNG…TWDRATNTCG (63 aa)). 4 disulfide bridges follow: cysteine 18-cysteine 69, cysteine 22-cysteine 44, cysteine 30-cysteine 50, and cysteine 34-cysteine 52. Arginine amide is present on arginine 71.

This sequence belongs to the long (4 C-C) scorpion toxin superfamily. Sodium channel inhibitor family. Beta subfamily. Expressed by the venom gland.

The protein localises to the secreted. In terms of biological role, beta toxins bind voltage-independently at site-4 of sodium channels (Nav) and shift the voltage of activation toward more negative potentials thereby affecting sodium channel activation and promoting spontaneous and repetitive firing. This Tityus discrepans (Venezuelan scorpion) protein is Toxin Td12.